We begin with the raw amino-acid sequence, 223 residues long: 2-C-methyl-D-erythritol 4-phosphate cytidylyltransferase (223 aa).

Belongs to the IspD/TarI cytidylyltransferase family. IspD subfamily.

It carries out the reaction 2-C-methyl-D-erythritol 4-phosphate + CTP + H(+) = 4-CDP-2-C-methyl-D-erythritol + diphosphate. It participates in isoprenoid biosynthesis; isopentenyl diphosphate biosynthesis via DXP pathway; isopentenyl diphosphate from 1-deoxy-D-xylulose 5-phosphate: step 2/6. Functionally, catalyzes the formation of 4-diphosphocytidyl-2-C-methyl-D-erythritol from CTP and 2-C-methyl-D-erythritol 4-phosphate (MEP). This chain is 2-C-methyl-D-erythritol 4-phosphate cytidylyltransferase, found in Synechococcus sp. (strain WH7803).